A 170-amino-acid chain; its full sequence is Xanthine-guanine phosphoribosyltransferase (170 aa).

5-phospho-alpha-D-ribose 1-diphosphate is bound by residues 41–42 (RG) and 98–106 (DDLTDTGKT). Asp-99 is a Mg(2+) binding site. Asp-102 contacts guanine. Asp-102 is a binding site for xanthine. Residue 102–106 (DTGKT) coordinates GMP.

The protein belongs to the purine/pyrimidine phosphoribosyltransferase family. XGPT subfamily. Homotetramer. Mg(2+) serves as cofactor.

The protein resides in the cell inner membrane. The enzyme catalyses GMP + diphosphate = guanine + 5-phospho-alpha-D-ribose 1-diphosphate. The catalysed reaction is XMP + diphosphate = xanthine + 5-phospho-alpha-D-ribose 1-diphosphate. It catalyses the reaction IMP + diphosphate = hypoxanthine + 5-phospho-alpha-D-ribose 1-diphosphate. It functions in the pathway purine metabolism; GMP biosynthesis via salvage pathway; GMP from guanine: step 1/1. It participates in purine metabolism; XMP biosynthesis via salvage pathway; XMP from xanthine: step 1/1. Functionally, purine salvage pathway enzyme that catalyzes the transfer of the ribosyl-5-phosphate group from 5-phospho-alpha-D-ribose 1-diphosphate (PRPP) to the N9 position of the 6-oxopurines guanine and xanthine to form the corresponding ribonucleotides GMP (guanosine 5'-monophosphate) and XMP (xanthosine 5'-monophosphate), with the release of PPi. To a lesser extent, also acts on hypoxanthine. This Brucella abortus (strain 2308) protein is Xanthine-guanine phosphoribosyltransferase.